Here is a 116-residue protein sequence, read N- to C-terminus: Large ribosomal subunit protein bL17 (116 aa).

The protein belongs to the bacterial ribosomal protein bL17 family. As to quaternary structure, part of the 50S ribosomal subunit. Contacts protein L32.

The protein is Large ribosomal subunit protein bL17 of Helicobacter pylori (strain J99 / ATCC 700824) (Campylobacter pylori J99).